We begin with the raw amino-acid sequence, 118 residues long: Hydrogenase maturation factor HypA (118 aa).

A Ni(2+)-binding site is contributed by His-2. Zn(2+) contacts are provided by Cys-73, Cys-76, Cys-90, and Cys-93.

Belongs to the HypA/HybF family.

Functionally, involved in the maturation of [NiFe] hydrogenases. Required for nickel insertion into the metal center of the hydrogenase. The polypeptide is Hydrogenase maturation factor HypA (Salmonella typhi).